We begin with the raw amino-acid sequence, 215 residues long: 3-demethoxyubiquinol 3-hydroxylase (215 aa).

6 residues coordinate Fe cation: glutamate 64, glutamate 94, histidine 97, glutamate 146, glutamate 178, and histidine 181.

Belongs to the COQ7 family. Fe cation serves as cofactor.

It localises to the cell membrane. It carries out the reaction a 5-methoxy-2-methyl-3-(all-trans-polyprenyl)benzene-1,4-diol + AH2 + O2 = a 3-demethylubiquinol + A + H2O. It participates in cofactor biosynthesis; ubiquinone biosynthesis. Catalyzes the hydroxylation of 2-nonaprenyl-3-methyl-6-methoxy-1,4-benzoquinol during ubiquinone biosynthesis. This is 3-demethoxyubiquinol 3-hydroxylase from Coxiella burnetii (strain CbuG_Q212) (Coxiella burnetii (strain Q212)).